The primary structure comprises 293 residues: Small ribosomal subunit biogenesis GTPase RsgA (293 aa).

Residues 63 to 223 (QNELVRPPVA…VADTPGFSAL (161 aa)) enclose the CP-type G domain. GTP contacts are provided by residues 112 to 115 (SKID) and 166 to 174 (GQSGVGKSS). The Zn(2+) site is built by cysteine 247, cysteine 252, histidine 254, and cysteine 260.

Belongs to the TRAFAC class YlqF/YawG GTPase family. RsgA subfamily. As to quaternary structure, monomer. Associates with 30S ribosomal subunit, binds 16S rRNA. It depends on Zn(2+) as a cofactor.

It is found in the cytoplasm. Its function is as follows. One of several proteins that assist in the late maturation steps of the functional core of the 30S ribosomal subunit. Helps release RbfA from mature subunits. May play a role in the assembly of ribosomal proteins into the subunit. Circularly permuted GTPase that catalyzes slow GTP hydrolysis, GTPase activity is stimulated by the 30S ribosomal subunit. This chain is Small ribosomal subunit biogenesis GTPase RsgA, found in Geobacillus thermodenitrificans (strain NG80-2).